We begin with the raw amino-acid sequence, 105 residues long: Small ribosomal subunit protein uS10 (105 aa).

This sequence belongs to the universal ribosomal protein uS10 family. In terms of assembly, part of the 30S ribosomal subunit.

Functionally, involved in the binding of tRNA to the ribosomes. This chain is Small ribosomal subunit protein uS10, found in Arthrospira platensis (Spirulina platensis).